The primary structure comprises 158 residues: Endoribonuclease YbeY (158 aa).

Zn(2+) contacts are provided by His118, His122, and His128.

This sequence belongs to the endoribonuclease YbeY family. Zn(2+) serves as cofactor.

Its subcellular location is the cytoplasm. In terms of biological role, single strand-specific metallo-endoribonuclease involved in late-stage 70S ribosome quality control and in maturation of the 3' terminus of the 16S rRNA. This is Endoribonuclease YbeY from Haemophilus ducreyi (strain 35000HP / ATCC 700724).